The following is a 496-amino-acid chain: Genome polyprotein (496 aa).

The Extracellular segment spans residues 1-447; sequence SRCTHLENRD…HTVLGGAFNS (447 aa). 6 disulfides stabilise this stretch: cysteine 3-cysteine 30, cysteine 60-cysteine 116, cysteine 60-cysteine 121, cysteine 74-cysteine 105, cysteine 92-cysteine 116, and cysteine 92-cysteine 121. Residues 98–111 form a fusion peptide region; the sequence is DRGWGNHCGLFGKG. Residue asparagine 154 is glycosylated (N-linked (GlcNAc...) asparagine; by host). 2 cysteine pairs are disulfide-bonded: cysteine 186–cysteine 290 and cysteine 307–cysteine 338. The helical transmembrane segment at 448–468 threads the bilayer; the sequence is IFGGVGFLPKLLMGVALAWLG. Topologically, residues 469-479 are cytoplasmic; that stretch reads LNTRNPTMSMS. Residues 480–496 traverse the membrane as a helical segment; that stretch reads FLLTGGLVLAMTLGVGA.

In terms of assembly, homodimer; in the endoplasmic reticulum and Golgi. N-glycosylated.

Its subcellular location is the virion membrane. It is found in the host endoplasmic reticulum membrane. Its function is as follows. Binds to host cell surface receptor and mediates fusion between viral and cellular membranes. Envelope protein is synthesized in the endoplasmic reticulum in the form of heterodimer with protein prM. They play a role in virion budding in the ER, and the newly formed immature particle is covered with 60 spikes composed of heterodimer between precursor prM and envelope protein E. The virion is transported to the Golgi apparatus where the low pH causes dissociation of PrM-E heterodimers and formation of E homodimers. prM-E cleavage is ineficient, and many virions are only partially matured. These uncleaved prM would play a role in immune evasion. This chain is Genome polyprotein, found in Bos taurus (Bovine).